Consider the following 55-residue polypeptide: Large ribosomal subunit protein bL33 (55 aa).

This sequence belongs to the bacterial ribosomal protein bL33 family.

The chain is Large ribosomal subunit protein bL33 from Bradyrhizobium diazoefficiens (strain JCM 10833 / BCRC 13528 / IAM 13628 / NBRC 14792 / USDA 110).